The primary structure comprises 100 residues: Large ribosomal subunit protein bL28 (100 aa).

This sequence belongs to the bacterial ribosomal protein bL28 family.

The protein is Large ribosomal subunit protein bL28 of Gluconobacter oxydans (strain 621H) (Gluconobacter suboxydans).